The chain runs to 58 residues: Large ribosomal subunit protein bL33 (58 aa).

It belongs to the bacterial ribosomal protein bL33 family.

This Brachyspira hyodysenteriae (strain ATCC 49526 / WA1) protein is Large ribosomal subunit protein bL33.